Here is a 663-residue protein sequence, read N- to C-terminus: UvrABC system protein B (663 aa).

The region spanning 31 to 271 is the Helicase ATP-binding domain; the sequence is DNIEGGEKAQ…EQSISKIQAE (241 aa). 44–51 is an ATP binding site; sequence GATGTGKT. The Beta-hairpin signature appears at 97–120; the sequence is YYDYYQPEAYVPSSDTYIEKDSSV. Residues 435–601 enclose the Helicase C-terminal domain; that stretch reads QMDDLLGEIN…TIKKDIRDLI (167 aa). In terms of domain architecture, UVR spans 627–662; the sequence is QEAIKQLQKNMQEAAELLDFELAAQLRDLILELKAM.

Belongs to the UvrB family. As to quaternary structure, forms a heterotetramer with UvrA during the search for lesions. Interacts with UvrC in an incision complex.

It localises to the cytoplasm. Functionally, the UvrABC repair system catalyzes the recognition and processing of DNA lesions. A damage recognition complex composed of 2 UvrA and 2 UvrB subunits scans DNA for abnormalities. Upon binding of the UvrA(2)B(2) complex to a putative damaged site, the DNA wraps around one UvrB monomer. DNA wrap is dependent on ATP binding by UvrB and probably causes local melting of the DNA helix, facilitating insertion of UvrB beta-hairpin between the DNA strands. Then UvrB probes one DNA strand for the presence of a lesion. If a lesion is found the UvrA subunits dissociate and the UvrB-DNA preincision complex is formed. This complex is subsequently bound by UvrC and the second UvrB is released. If no lesion is found, the DNA wraps around the other UvrB subunit that will check the other stand for damage. This chain is UvrABC system protein B, found in Streptococcus equi subsp. zooepidemicus (strain H70).